The chain runs to 1511 residues: ATP-dependent permease PDR12 (1511 aa).

The span at 1 to 21 (MSSTDEHIEKDISSRSNHDDD) shows a compositional bias: basic and acidic residues. Positions 1 to 37 (MSSTDEHIEKDISSRSNHDDDYANSVQSYAASEGQVD) are disordered. Residue Ser2 is modified to N-acetylserine. Topologically, residues 2–508 (SSTDEHIEKD…RGFQRVKGDS (507 aa)) are cytoplasmic. 3 positions are modified to phosphoserine: Ser32, Ser52, and Ser56. In terms of domain architecture, ABC transporter 1 spans 144-397 (IPAHLISKFT…FQRMGWVKPN (254 aa)). Residue Lys426 forms a Glycyl lysine isopeptide (Lys-Gly) (interchain with G-Cter in ubiquitin) linkage. Residues 509 to 529 (TYTKVYLSSFLIKALIIGSMF) form a helical membrane-spanning segment. Topologically, residues 530-548 (HKIDDKSQSTTAGAYSRGG) are extracellular. A helical transmembrane segment spans residues 549–569 (MLFYVLLFASVTSLAEIGNSF). The Cytoplasmic segment spans residues 570-597 (SSRPVIVKHKSYSMYHLSAESLQEIITE). Residues 598–618 (FPTKFVAIVILCLITYWIPFM) form a helical membrane-spanning segment. The Extracellular portion of the chain corresponds to 619–622 (KYEA). A helical membrane pass occupies residues 623–643 (GAFFQYILYLLTVQQCTSFIF). The Cytoplasmic segment spans residues 644 to 657 (KFVATMSKSGVDAH). The chain crosses the membrane as a helical span at residues 658–678 (AVGGLWVLMLCVYAGFVLPIG). The Extracellular segment spans residues 679–765 (EMHHWIRWLH…FAYKHAWRNW (87 aa)). A helical membrane pass occupies residues 766-786 (GVNIVWTFGYIVFNVILSEYL). Over 787–1182 (KPVEGGGDLL…WRSPVYIRAK (396 aa)) the chain is Cytoplasmic. Residues 836 to 1084 (IAEKDVFTWN…TLLKYFERQS (249 aa)) form the ABC transporter 2 domain. ATP is bound by residues 878-885 (GESGAGKT) and 972-979 (AEALVGKT). Residues 1183-1203 (FFECVACALFVGLSYVGVNHS) form a helical membrane-spanning segment. Val1204 is a topological domain (extracellular). A helical transmembrane segment spans residues 1205-1225 (GGAIEAFSSIFMLLLIALAMI). Over 1226–1254 (NQLHVFAYDSRELYEVREAASNTFHWSVL) the chain is Cytoplasmic. The helical transmembrane segment at 1255-1275 (LLCHAAVENFWSTLCQFMCFI) threads the bilayer. Residues 1276 to 1291 (CYYWPAQFSGRASHAG) lie on the Extracellular side of the membrane. A helical membrane pass occupies residues 1292–1312 (FFFFFYVLIFPLYFVTYGLWI). The Cytoplasmic portion of the chain corresponds to 1313–1318 (LYMSPD). A helical membrane pass occupies residues 1319-1339 (VPSASMINSNLFAAMLLFCGI). Over 1340 to 1444 (LQPREKMPAF…NVKWDHRWRN (105 aa)) the chain is Extracellular. Asn1405 is a glycosylation site (N-linked (GlcNAc...) asparagine). Residues 1445–1465 (FGFMWAYICFNIAAMLICYYV) traverse the membrane as a helical segment. The Cytoplasmic segment spans residues 1466–1511 (VRVKVWSLKSVLNFKKWFNGPRKERHEKDTNIFQTVPGDENKITKK).

Belongs to the ABC transporter superfamily. ABCG family. PDR (TC 3.A.1.205) subfamily.

The protein localises to the cell membrane. Its function is as follows. Plasma membrane transporter which mediates resistance to water-soluble, monocarboxylic acids with chain lengths of from C1 to C7 by active extrusion of the preservative anions from the cytosol. Also involved in the export of aromatic and branched-chain organic acids produced in amino acid catabolism. The chain is ATP-dependent permease PDR12 (PDR12) from Saccharomyces cerevisiae (strain ATCC 204508 / S288c) (Baker's yeast).